Reading from the N-terminus, the 228-residue chain is RING1 and YY1-binding protein (228 aa).

3 disordered regions span residues 1-21, 65-156, and 172-228; these read MTMG…PAAD, QVAQ…RSTA, and DFKE…DESF. Residues 21–50 form a RanBP2-type zinc finger; it reads DEGFWDCSVCTFRNSAEAFKCSICDVRKGT. Positions 76-98 are enriched in basic and acidic residues; sequence PKKEKKEKVEKQDKEKPEKDKEI. Lys77 participates in a covalent cross-link: Glycyl lysine isopeptide (Lys-Gly) (interchain with G-Cter in SUMO2). Ser99 bears the Phosphoserine mark. Over residues 113-122 the composition is skewed to basic and acidic residues; sequence PKSDILKDPP. Phosphoserine is present on residues Ser123, Ser127, and Ser130. The segment covering 124-143 has biased composition (polar residues); sequence EANSIQSANATTKTSETNHT. An interaction with GABPB1 and FANK1 region spans residues 143–226; it reads TSRPRLKNVD…KGDMSAVNDE (84 aa). The segment covering 179-204 has biased composition (low complexity); it reads SSSTSSSTVTSSAGSEQQNQSSSGSE. The residue at position 227 (Ser227) is a Phosphoserine.

Monomer. Component of repressive BCOR complex containing Polycomb group subcomplex at least composed of BCOR, PCGF1, RING1 and RNF2/RING2. Component of PCR1-like complexes. Interacts with PCGF1. Part of a PCR1-like complex that contains AUTS2, PCGF5, RNF2, CSNK2B and RYBP. Interacts with RNF2; the interaction is direct. Interacts with CBX2, YAF2, RING1 and RNF2. Interacts with ubiquitin and ubiquitinated proteins. Interacts with ubiquitinated histone H2A. Interacts with apoptin, DEDD, FADD, CASP8, CASP10, YY1 and GABPB1. Together with GABPB1 and YY1, it forms a ternary complex, probably being the bridge factor between these two transcription factors. Interacts with MDM2, and thereby inhibits ubiquitination of TP53. Identified in a ternary complex containing MDM2, TP53 and RYBP. Interacts with FANK1; may prevent the ubiquitin-mediated proteasomal degradation of FANK1. Interacts with IFT57. In terms of processing, monoubiquitinated. In terms of tissue distribution, down-regulated in breast cancer tissues and in several breast cancer cell lines (at protein level). Widely expressed with highest levels in lymphoid tissues and placenta.

Its subcellular location is the nucleus. It localises to the cytoplasm. It is found in the nucleoplasm. In terms of biological role, component of a Polycomb group (PcG) multiprotein PRC1-like complex, a complex class required to maintain the transcriptionally repressive state of many genes, including Hox genes, throughout development. PcG PRC1-like complex acts via chromatin remodeling and modification of histones; it mediates monoubiquitination of histone H2A 'Lys-119', rendering chromatin heritably changed in its expressibility. Component of a PRC1-like complex that mediates monoubiquitination of histone H2A 'Lys-119' on the X chromosome and is required for normal silencing of one copy of the X chromosome in XX females. May stimulate ubiquitination of histone H2A 'Lys-119' by recruiting the complex to target sites. Inhibits ubiquitination and subsequent degradation of TP53, and thereby plays a role in regulating transcription of TP53 target genes. May also regulate the ubiquitin-mediated proteasomal degradation of other proteins like FANK1 to regulate apoptosis. May be implicated in the regulation of the transcription as a repressor of the transcriptional activity of E4TF1. May bind to DNA. May play a role in the repression of tumor growth and metastasis in breast cancer by down-regulating SRRM3. The sequence is that of RING1 and YY1-binding protein (RYBP) from Homo sapiens (Human).